A 513-amino-acid chain; its full sequence is ATP synthase subunit alpha (513 aa).

169–176 (GDRQIGKT) provides a ligand contact to ATP.

It belongs to the ATPase alpha/beta chains family. As to quaternary structure, F-type ATPases have 2 components, CF(1) - the catalytic core - and CF(0) - the membrane proton channel. CF(1) has five subunits: alpha(3), beta(3), gamma(1), delta(1), epsilon(1). CF(0) has three main subunits: a(1), b(2) and c(9-12). The alpha and beta chains form an alternating ring which encloses part of the gamma chain. CF(1) is attached to CF(0) by a central stalk formed by the gamma and epsilon chains, while a peripheral stalk is formed by the delta and b chains.

The protein localises to the cell inner membrane. It carries out the reaction ATP + H2O + 4 H(+)(in) = ADP + phosphate + 5 H(+)(out). Produces ATP from ADP in the presence of a proton gradient across the membrane. The alpha chain is a regulatory subunit. In Shewanella halifaxensis (strain HAW-EB4), this protein is ATP synthase subunit alpha.